Here is a 69-residue protein sequence, read N- to C-terminus: Large ribosomal subunit protein bL31 (69 aa).

Zn(2+) is bound by residues Cys-17, Cys-19, Cys-37, and Cys-40.

Belongs to the bacterial ribosomal protein bL31 family. Type A subfamily. As to quaternary structure, part of the 50S ribosomal subunit. Zn(2+) serves as cofactor.

In terms of biological role, binds the 23S rRNA. This Caldanaerobacter subterraneus subsp. tengcongensis (strain DSM 15242 / JCM 11007 / NBRC 100824 / MB4) (Thermoanaerobacter tengcongensis) protein is Large ribosomal subunit protein bL31.